A 445-amino-acid polypeptide reads, in one-letter code: Neuropeptide Y receptor type 5 (445 aa).

The Extracellular segment spans residues 1-42; the sequence is MDLELDEYYNKTLATENNTAATRNSDFPVWDDYKSSVDDLQY. N-linked (GlcNAc...) asparagine glycosylation is found at asparagine 10 and asparagine 17. A helical transmembrane segment spans residues 43 to 63; that stretch reads FLIGLYTFVSLLGFMGNLLIL. Topologically, residues 64 to 77 are cytoplasmic; it reads MALMKKRNQKTTVN. The chain crosses the membrane as a helical span at residues 78-98; it reads FLIGNLAFSDILVVLFCSPFT. At 99–117 the chain is on the extracellular side; sequence LTSVLLDQWMFGKVMCHIM. The cysteines at positions 114 and 198 are disulfide-linked. Residues 118 to 138 form a helical membrane-spanning segment; sequence PFLQCVSVLVSTLILISIAIV. The Cytoplasmic segment spans residues 139-156; the sequence is RYHMIKHPISNNLTANHG. Residues 157 to 177 form a helical membrane-spanning segment; the sequence is YFLIATVWTLGFAICSPLPVF. Residues 178–208 lie on the Extracellular side of the membrane; sequence HSLVELQETFGSALLSSRYLCVESWPSDSYR. Residues 209 to 229 traverse the membrane as a helical segment; it reads IAFTISLLLVQYILPLVCLTV. Residues 230–369 are Cytoplasmic-facing; sequence SHTSVCRSIS…KKRSRSVFYR (140 aa). The chain crosses the membrane as a helical span at residues 370–390; that stretch reads LTILILVFAVSWMPLHLFHVV. Topologically, residues 391–407 are extracellular; that stretch reads TDFNDNLISNRHFKLVY. Residues 408–428 form a helical membrane-spanning segment; it reads CICHLLGMMSCCLNPILYGFL. Residues 429-445 are Cytoplasmic-facing; it reads NNGIKADLVSLIHCLHM. Residue cysteine 442 is the site of S-palmitoyl cysteine attachment.

It belongs to the G-protein coupled receptor 1 family. As to expression, brain; hypothalamus.

The protein localises to the cell membrane. Receptor for neuropeptide Y and peptide YY. The activity of this receptor is mediated by G proteins that inhibit adenylate cyclase activity. Seems to be associated with food intake. Could be involved in feeding disorders. In Homo sapiens (Human), this protein is Neuropeptide Y receptor type 5 (NPY5R).